A 347-amino-acid chain; its full sequence is Ion-translocating oxidoreductase complex subunit D (347 aa).

The next 4 membrane-spanning stretches (helical) occupy residues 15–35, 36–56, 84–104, and 114–134; these read IMFLVIVACLPGIFAKYYFFG, IGTLIQIFFSIFISLVLEIII, IPPLLPWWMTSIGLFFAIVVA, and NIFNPAMVGYAVLLISFPVYM. The residue at position 182 (T182) is an FMN phosphoryl threonine. 5 helical membrane-spanning segments follow: residues 217-237, 239-259, 261-281, 289-309, and 315-335; these read CINISFFLGGIFLLFTKIICW, IPISFLSSLGMLSIITYFYSK, LFMSPQVHFFSGGTMICAFFI, ACNNVGKIVFGIIIGFLVWII, and YPDAIAFSVLFANMTVPLVDY.

This sequence belongs to the NqrB/RnfD family. As to quaternary structure, the complex is composed of six subunits: RnfA, RnfB, RnfC, RnfD, RnfE and RnfG. FMN is required as a cofactor.

It is found in the cell inner membrane. Its function is as follows. Part of a membrane-bound complex that couples electron transfer with translocation of ions across the membrane. The protein is Ion-translocating oxidoreductase complex subunit D of Buchnera aphidicola subsp. Acyrthosiphon pisum (strain 5A).